The chain runs to 145 residues: Small ribosomal subunit protein uS12 (145 aa).

Position 64 is a hydroxyproline (Pro-64).

This sequence belongs to the universal ribosomal protein uS12 family.

The chain is Small ribosomal subunit protein uS12 (rps23) from Aspergillus fumigatus (strain ATCC MYA-4609 / CBS 101355 / FGSC A1100 / Af293) (Neosartorya fumigata).